The following is a 380-amino-acid chain: Succinyl-diaminopimelate desuccinylase (380 aa).

His-71 contacts Zn(2+). Asp-73 is a catalytic residue. A Zn(2+)-binding site is contributed by Asp-104. Residue Glu-138 is the Proton acceptor of the active site. Residues Glu-139, Glu-167, and His-353 each contribute to the Zn(2+) site.

It belongs to the peptidase M20A family. DapE subfamily. In terms of assembly, homodimer. The cofactor is Zn(2+). It depends on Co(2+) as a cofactor.

It carries out the reaction N-succinyl-(2S,6S)-2,6-diaminopimelate + H2O = (2S,6S)-2,6-diaminopimelate + succinate. Its pathway is amino-acid biosynthesis; L-lysine biosynthesis via DAP pathway; LL-2,6-diaminopimelate from (S)-tetrahydrodipicolinate (succinylase route): step 3/3. In terms of biological role, catalyzes the hydrolysis of N-succinyl-L,L-diaminopimelic acid (SDAP), forming succinate and LL-2,6-diaminopimelate (DAP), an intermediate involved in the bacterial biosynthesis of lysine and meso-diaminopimelic acid, an essential component of bacterial cell walls. The protein is Succinyl-diaminopimelate desuccinylase of Shewanella baltica (strain OS185).